The sequence spans 423 residues: Torsin-4A (423 aa).

A disordered region spans residues 47 to 68 (PGGGPDVGTGAPRPGCSPRAPR). Phosphoserine is present on residues Ser63 and Ser81. Thr89 is subject to Phosphothreonine. Phosphoserine is present on Ser106. The helical transmembrane segment at 122-138 (CLLLLVAIVGFQVLNAI) threads the bilayer. An ATP-binding site is contributed by 194 to 201 (GPSGVGKS).

It belongs to the ClpA/ClpB family. Torsin subfamily.

The protein resides in the membrane. The chain is Torsin-4A (TOR4A) from Homo sapiens (Human).